The primary structure comprises 134 residues: UPF0412 protein YaaI (134 aa).

The N-terminal stretch at M1–A23 is a signal peptide.

It belongs to the UPF0412 family.

The protein is UPF0412 protein YaaI of Escherichia coli (strain K12).